The following is an 856-amino-acid chain: Increased rDNA silencing protein 4 (856 aa).

3 disordered regions span residues 1–204 (MSAS…EPKS), 230–563 (KQEE…PTPE), and 589–672 (TSLE…DEDL). Composition is skewed to low complexity over residues 12–42 (GPAS…ATLA), 67–84 (VPTP…RTVG), and 111–130 (SRVV…AGRT). Residues 152–162 (HVEERANDHAP) show a composition bias toward basic and acidic residues. The segment covering 194–204 (ASAKPSSEPKS) has biased composition (low complexity). The segment covering 239–254 (KKKKKKKPRPASKTQH) has biased composition (basic residues). 2 stretches are compositionally biased toward polar residues: residues 255–275 (HQTL…ENQC) and 303–315 (SLST…SSTG). The span at 329 to 347 (GETRNRNGDVRDKPSREGG) shows a compositional bias: basic and acidic residues. 3 stretches are compositionally biased toward polar residues: residues 396–410 (PVSQ…TIIS), 451–468 (RVVS…QSAE), and 478–488 (RNSTSSDETFV). Over residues 503–514 (KELERVRPRLDR) the composition is skewed to basic and acidic residues. Over residues 517–535 (TSTSSRASRVSTPASVRSP) the composition is skewed to low complexity. Positions 603-620 (RRGHRHHHLPHPHLRHRT) are enriched in basic residues. The segment covering 644-654 (PSRQTEHTQPA) has biased composition (polar residues). An EH domain is found at 743–832 (DSLGQVDLSR…EGVWESAMDR (90 aa)).

Belongs to the IRS4 family.

Its function is as follows. Positive regulator of phosphatidylinositol 4,5-bisphosphate turnover and negatively regulates signaling through the cell integrity pathway. Involved in rDNA silencing. The chain is Increased rDNA silencing protein 4 (irs-4) from Neurospora crassa (strain ATCC 24698 / 74-OR23-1A / CBS 708.71 / DSM 1257 / FGSC 987).